Reading from the N-terminus, the 273-residue chain is Formamidopyrimidine-DNA glycosylase (273 aa).

The active-site Schiff-base intermediate with DNA is Pro-2. Glu-3 acts as the Proton donor in catalysis. Catalysis depends on Lys-60, which acts as the Proton donor; for beta-elimination activity. 3 residues coordinate DNA: His-94, Arg-113, and Arg-154. The FPG-type zinc-finger motif lies at 239–273; the sequence is NAYDREGQPCPRCGATIIKTVVAQRGTHYCPECQR. Arg-263 (proton donor; for delta-elimination activity) is an active-site residue.

This sequence belongs to the FPG family. In terms of assembly, monomer. Requires Zn(2+) as cofactor.

The catalysed reaction is Hydrolysis of DNA containing ring-opened 7-methylguanine residues, releasing 2,6-diamino-4-hydroxy-5-(N-methyl)formamidopyrimidine.. It carries out the reaction 2'-deoxyribonucleotide-(2'-deoxyribose 5'-phosphate)-2'-deoxyribonucleotide-DNA = a 3'-end 2'-deoxyribonucleotide-(2,3-dehydro-2,3-deoxyribose 5'-phosphate)-DNA + a 5'-end 5'-phospho-2'-deoxyribonucleoside-DNA + H(+). Functionally, involved in base excision repair of DNA damaged by oxidation or by mutagenic agents. Acts as a DNA glycosylase that recognizes and removes damaged bases. Has a preference for oxidized purines, such as 7,8-dihydro-8-oxoguanine (8-oxoG). Has AP (apurinic/apyrimidinic) lyase activity and introduces nicks in the DNA strand. Cleaves the DNA backbone by beta-delta elimination to generate a single-strand break at the site of the removed base with both 3'- and 5'-phosphates. This is Formamidopyrimidine-DNA glycosylase from Roseiflexus sp. (strain RS-1).